A 347-amino-acid chain; its full sequence is N-acetyl-gamma-glutamyl-phosphate reductase (347 aa).

The active site involves C152.

This sequence belongs to the NAGSA dehydrogenase family. Type 1 subfamily.

The protein localises to the cytoplasm. The enzyme catalyses N-acetyl-L-glutamate 5-semialdehyde + phosphate + NADP(+) = N-acetyl-L-glutamyl 5-phosphate + NADPH + H(+). It functions in the pathway amino-acid biosynthesis; L-arginine biosynthesis; N(2)-acetyl-L-ornithine from L-glutamate: step 3/4. Functionally, catalyzes the NADPH-dependent reduction of N-acetyl-5-glutamyl phosphate to yield N-acetyl-L-glutamate 5-semialdehyde. The sequence is that of N-acetyl-gamma-glutamyl-phosphate reductase from Neisseria meningitidis serogroup C / serotype 2a (strain ATCC 700532 / DSM 15464 / FAM18).